Here is a 767-residue protein sequence, read N- to C-terminus: Start control protein cdc10 (767 aa).

Residues 17-44 are disordered; it reads FSYQKRPEDEPSQPLSNRNINKLNDSST. A compositionally biased stretch (polar residues) spans 29-44; the sequence is QPLSNRNINKLNDSST. Residues 66–173 enclose the HTH APSES-type domain; it reads ELYAVECSGM…FNLDLFPKFS (108 aa). Positions 98 to 119 form a DNA-binding region, H-T-H motif; sequence ISQILRLAGTSSSENAKELDDI. A disordered region spans residues 189 to 230; sequence TSSFNTRSPLRNHNFSNPSKSSKNGVHTINNMQSSPSPSSSF. The span at 192 to 221 shows a compositional bias: polar residues; sequence FNTRSPLRNHNFSNPSKSSKNGVHTINNMQ. The residue at position 252 (Ser-252) is a Phosphoserine. A Nuclear localization signal motif is present at residues 261–264; the sequence is KRHR. ANK repeat units follow at residues 356–385 and 483–512; these read LGHA…NPLR and NGDT…SAYI. The interval 542–562 is disordered; sequence VSLMSENLSSKEKTAVPPRQK.

As to quaternary structure, DSC1 contains cdc10 and sct1/res1. Interacts with pol5.

It localises to the nucleus. Its function is as follows. Major component of the cell cycle transcription factor complex MBF (MCB binding factor, also known as DSC1), that controls G1-S phase specific gene expression. Involved in the control of rRNA production, via interaction with pol5. May be involved in the transcriptional regulation of the cdc22 and cdt1 genes. In fission yeast, two genes, cdc10 and cdc2, are required for the cell cycle control called start, the point early in the G1 phase at which cells become committed to the mitotic cycle. The chain is Start control protein cdc10 (cdc10) from Schizosaccharomyces pombe (strain 972 / ATCC 24843) (Fission yeast).